Consider the following 301-residue polypeptide: tRNA pseudouridine synthase B (301 aa).

D45 serves as the catalytic Nucleophile.

It belongs to the pseudouridine synthase TruB family. Type 1 subfamily.

The enzyme catalyses uridine(55) in tRNA = pseudouridine(55) in tRNA. Functionally, responsible for synthesis of pseudouridine from uracil-55 in the psi GC loop of transfer RNAs. The polypeptide is tRNA pseudouridine synthase B (Streptomyces avermitilis (strain ATCC 31267 / DSM 46492 / JCM 5070 / NBRC 14893 / NCIMB 12804 / NRRL 8165 / MA-4680)).